The following is a 493-amino-acid chain: MENLEQTCASLRAQIAATEAQLAGLKRELEIAEQAAEVKAQSTTRTITAEDGKTNETREWPLLSEEYKRYGRQMIVPQLGLQGQLKLRAARVLIVGAGGLGCPAALYLAGAGVGTLGLVDGDTVENSNLHRQVLHSSKNVGTFKVDSAIEYLRELNPHPTYVPYRAHLTPQEAPGIFKDYDIVLDCTDNPATRYLISDTAVLLGKPLVSASALRTEGQLMVLNYPPRPVGDKSGGPCYRCVFPKPPPANSVVSCADGGILGPVVGTMGVLQALEAIKVITSPAVNPSASPPSLLIFSAYSTPLFRTIRLRARRANCAVCSADASVTLETLKNGSTDYVFFCGVAGLEATLSPEERISPLEFKKRHPKEVPQDGGRINKEPTIIDVREKVQFDICSLENSINIPISTILSSASSPTNVDANAQPSLPFWLPRELASADSTDPIYVVCRHGNDSQIAVRRLKELGLDRGGQRYVGDIQGGLRAWREQIDPDWPEY.

ATP-binding positions include Gly99, Asp120, Ser127–Arg131, Lys144, and Asp188–Asn189. Zn(2+) contacts are provided by Cys237 and Cys240. The Glycyl thioester intermediate; for adenylyltransferase activity role is filled by Cys254. Zn(2+) is bound by residues Cys316 and Cys319. One can recognise a Rhodanese domain in the interval Ile376–Pro491. Cys446 serves as the catalytic Cysteine persulfide intermediate; for sulfurtransferase activity.

In the N-terminal section; belongs to the HesA/MoeB/ThiF family. UBA4 subfamily. Zn(2+) serves as cofactor.

It localises to the cytoplasm. The protein localises to the cytosol. The catalysed reaction is [molybdopterin-synthase sulfur-carrier protein]-C-terminal Gly-Gly + ATP + H(+) = [molybdopterin-synthase sulfur-carrier protein]-C-terminal Gly-Gly-AMP + diphosphate. The enzyme catalyses [molybdopterin-synthase sulfur-carrier protein]-C-terminal Gly-Gly-AMP + S-sulfanyl-L-cysteinyl-[cysteine desulfurase] + AH2 = [molybdopterin-synthase sulfur-carrier protein]-C-terminal-Gly-aminoethanethioate + L-cysteinyl-[cysteine desulfurase] + A + AMP + 2 H(+). Its pathway is tRNA modification; 5-methoxycarbonylmethyl-2-thiouridine-tRNA biosynthesis. It functions in the pathway cofactor biosynthesis; molybdopterin biosynthesis. Its function is as follows. Plays a central role in 2-thiolation of mcm(5)S(2)U at tRNA wobble positions of cytosolic tRNA(Lys), tRNA(Glu) and tRNA(Gln). Also essential during biosynthesis of the molybdenum cofactor. Acts by mediating the C-terminal thiocarboxylation of sulfur carriers urm1 and mocs2a. Its N-terminus first activates urm1 and mocs2a as acyl-adenylates (-COAMP), then the persulfide sulfur on the catalytic cysteine is transferred to urm1 and mocs2a to form thiocarboxylation (-COSH) of their C-terminus. The reaction probably involves hydrogen sulfide that is generated from the persulfide intermediate and that acts as a nucleophile towards urm1 and mocs2a. Subsequently, a transient disulfide bond is formed. Does not use thiosulfate as sulfur donor; nfs1 probably acting as a sulfur donor for thiocarboxylation reactions. In Aspergillus fumigatus (strain CBS 144.89 / FGSC A1163 / CEA10) (Neosartorya fumigata), this protein is Adenylyltransferase and sulfurtransferase uba4.